A 209-amino-acid polypeptide reads, in one-letter code: High frequency lysogenization protein HflD homolog (209 aa).

A coiled-coil region spans residues 79–121 (QGLNAELTRYTLSLMVLERKLNSAKGAMDTLGDRIAGLQRQLD).

It belongs to the HflD family.

The protein localises to the cytoplasm. It is found in the cell inner membrane. The chain is High frequency lysogenization protein HflD homolog from Enterobacter sp. (strain 638).